Consider the following 174-residue polypeptide: Crossover junction endodeoxyribonuclease RuvC (174 aa).

Active-site residues include Asp8, Glu69, and Asp141. 3 residues coordinate Mg(2+): Asp8, Glu69, and Asp141.

It belongs to the RuvC family. In terms of assembly, homodimer which binds Holliday junction (HJ) DNA. The HJ becomes 2-fold symmetrical on binding to RuvC with unstacked arms; it has a different conformation from HJ DNA in complex with RuvA. In the full resolvosome a probable DNA-RuvA(4)-RuvB(12)-RuvC(2) complex forms which resolves the HJ. Mg(2+) is required as a cofactor.

It is found in the cytoplasm. It carries out the reaction Endonucleolytic cleavage at a junction such as a reciprocal single-stranded crossover between two homologous DNA duplexes (Holliday junction).. Functionally, the RuvA-RuvB-RuvC complex processes Holliday junction (HJ) DNA during genetic recombination and DNA repair. Endonuclease that resolves HJ intermediates. Cleaves cruciform DNA by making single-stranded nicks across the HJ at symmetrical positions within the homologous arms, yielding a 5'-phosphate and a 3'-hydroxyl group; requires a central core of homology in the junction. The consensus cleavage sequence is 5'-(A/T)TT(C/G)-3'. Cleavage occurs on the 3'-side of the TT dinucleotide at the point of strand exchange. HJ branch migration catalyzed by RuvA-RuvB allows RuvC to scan DNA until it finds its consensus sequence, where it cleaves and resolves the cruciform DNA. The polypeptide is Crossover junction endodeoxyribonuclease RuvC (Xanthomonas euvesicatoria pv. vesicatoria (strain 85-10) (Xanthomonas campestris pv. vesicatoria)).